The sequence spans 732 residues: Catalase-peroxidase (732 aa).

The interval 1 to 20 is disordered; that stretch reads MDKDSKRPVVGSTVRGGMSN. A cross-link (tryptophyl-tyrosyl-methioninium (Trp-Tyr) (with M-246)) is located at residues 92 to 220; the sequence is WHSAGTYRMG…LAAVQMGLIY (129 aa). Residue histidine 93 is the Proton acceptor of the active site. Residues 220 to 246 constitute a cross-link (tryptophyl-tyrosyl-methioninium (Tyr-Met) (with W-92)); sequence YVNPEGPDGNPDPVAAGYDVIETFARM. Position 261 (histidine 261) interacts with heme b.

It belongs to the peroxidase family. Peroxidase/catalase subfamily. In terms of assembly, homodimer or homotetramer. It depends on heme b as a cofactor. Post-translationally, formation of the three residue Trp-Tyr-Met cross-link is important for the catalase, but not the peroxidase activity of the enzyme.

It carries out the reaction H2O2 + AH2 = A + 2 H2O. The catalysed reaction is 2 H2O2 = O2 + 2 H2O. Bifunctional enzyme with both catalase and broad-spectrum peroxidase activity. This is Catalase-peroxidase from Desulfosudis oleivorans (strain DSM 6200 / JCM 39069 / Hxd3) (Desulfococcus oleovorans).